We begin with the raw amino-acid sequence, 227 residues long: UPF0688 protein C1orf174 homolog (227 aa).

2 disordered regions span residues M1–L122 and A207–I227. Basic and acidic residues predominate over residues T47 to V63. 2 stretches are compositionally biased toward polar residues: residues A77–R104 and R113–L122.

Belongs to the UPF0688 family.

The protein resides in the nucleus. This Xenopus tropicalis (Western clawed frog) protein is UPF0688 protein C1orf174 homolog.